Reading from the N-terminus, the 560-residue chain is Hydroxyisourate hydrolase (560 aa).

Positions 1–31 (MMEPPQTRLMINVFIVSFLALLVNLVVGVLG) are cleaved as a signal peptide. Residues 32–517 (ADNYSRDDFP…LEQDPITCSK (486 aa)) lie on the Peroxisomal side of the membrane. The N-linked (GlcNAc...) asparagine glycan is linked to asparagine 34. A beta-D-glucoside-binding positions include glutamine 54 and 198–199 (NE). Glutamate 199 acts as the Proton donor in catalysis. Cysteine 218 and cysteine 223 are joined by a disulfide. N-linked (GlcNAc...) asparagine glycans are attached at residues asparagine 226 and asparagine 231. Tyrosine 343 lines the a beta-D-glucoside pocket. An N-linked (GlcNAc...) asparagine glycan is attached at asparagine 347. A beta-D-glucoside is bound at residue glutamate 408. Glutamate 408 functions as the Nucleophile in the catalytic mechanism. Asparagine 416 carries an N-linked (GlcNAc...) asparagine glycan. Phenylalanine 467 is a binding site for a beta-D-glucoside. Residue asparagine 489 is glycosylated (N-linked (GlcNAc...) asparagine). The helical transmembrane segment at 518 to 538 (SPIIFSKISKWVLASLLFLIQ) threads the bilayer. Over 539–560 (HKIKFMWREPLPGQIPLKLVMF) the chain is Cytoplasmic.

It belongs to the glycosyl hydrolase 1 family. As to quaternary structure, monomer. In terms of tissue distribution, highly expressed in uninfected root nodules. Detected in leaves, stems and roots.

The protein localises to the peroxisome membrane. The enzyme catalyses 5-hydroxyisourate + H2O = 5-hydroxy-2-oxo-4-ureido-2,5-dihydro-1H-imidazole-5-carboxylate + H(+). The protein operates within purine metabolism; urate degradation; (S)-allantoin from urate: step 2/3. Its function is as follows. Involved in the conversion of hydroxyisourate to ureides such as allantoin, the major form of nitrogen transport in legumes. In Glycine max (Soybean), this protein is Hydroxyisourate hydrolase (HIUH).